The sequence spans 305 residues: Ornithine carbamoyltransferase (305 aa).

Carbamoyl phosphate contacts are provided by residues 50–53 (STRT), glutamine 77, arginine 101, and 128–131 (HPCQ). L-ornithine contacts are provided by residues asparagine 162, aspartate 220, and 224-225 (SM). Carbamoyl phosphate is bound by residues 260–261 (CL) and arginine 288.

This sequence belongs to the aspartate/ornithine carbamoyltransferase superfamily. OTCase family.

The protein localises to the cytoplasm. It catalyses the reaction carbamoyl phosphate + L-ornithine = L-citrulline + phosphate + H(+). Its pathway is amino-acid degradation; L-arginine degradation via ADI pathway; carbamoyl phosphate from L-arginine: step 2/2. Reversibly catalyzes the transfer of the carbamoyl group from carbamoyl phosphate (CP) to the N(epsilon) atom of ornithine (ORN) to produce L-citrulline. The polypeptide is Ornithine carbamoyltransferase (Akkermansia muciniphila (strain ATCC BAA-835 / DSM 22959 / JCM 33894 / BCRC 81048 / CCUG 64013 / CIP 107961 / Muc)).